Here is a 428-residue protein sequence, read N- to C-terminus: Serine hydroxymethyltransferase (428 aa).

Residues Leu-117 and 121-123 each bind (6S)-5,6,7,8-tetrahydrofolate; that span reads GHL. Position 226 is an N6-(pyridoxal phosphate)lysine (Lys-226).

It belongs to the SHMT family. As to quaternary structure, homodimer. Pyridoxal 5'-phosphate is required as a cofactor.

It is found in the cytoplasm. It catalyses the reaction (6R)-5,10-methylene-5,6,7,8-tetrahydrofolate + glycine + H2O = (6S)-5,6,7,8-tetrahydrofolate + L-serine. It participates in one-carbon metabolism; tetrahydrofolate interconversion. It functions in the pathway amino-acid biosynthesis; glycine biosynthesis; glycine from L-serine: step 1/1. Functionally, catalyzes the reversible interconversion of serine and glycine with tetrahydrofolate (THF) serving as the one-carbon carrier. This reaction serves as the major source of one-carbon groups required for the biosynthesis of purines, thymidylate, methionine, and other important biomolecules. Also exhibits THF-independent aldolase activity toward beta-hydroxyamino acids, producing glycine and aldehydes, via a retro-aldol mechanism. This is Serine hydroxymethyltransferase from Aquifex aeolicus (strain VF5).